Reading from the N-terminus, the 88-residue chain is Small ribosomal subunit protein uS15 (88 aa).

Belongs to the universal ribosomal protein uS15 family. As to quaternary structure, part of the 30S ribosomal subunit. Forms a bridge to the 50S subunit in the 70S ribosome, contacting the 23S rRNA.

One of the primary rRNA binding proteins, it binds directly to 16S rRNA where it helps nucleate assembly of the platform of the 30S subunit by binding and bridging several RNA helices of the 16S rRNA. Functionally, forms an intersubunit bridge (bridge B4) with the 23S rRNA of the 50S subunit in the ribosome. The chain is Small ribosomal subunit protein uS15 from Acidobacterium capsulatum (strain ATCC 51196 / DSM 11244 / BCRC 80197 / JCM 7670 / NBRC 15755 / NCIMB 13165 / 161).